Here is a 270-residue protein sequence, read N- to C-terminus: Imidazole glycerol phosphate synthase subunit HisF (270 aa).

Active-site residues include Asp-11 and Asp-130.

Belongs to the HisA/HisF family. As to quaternary structure, heterodimer of HisH and HisF.

It localises to the cytoplasm. The enzyme catalyses 5-[(5-phospho-1-deoxy-D-ribulos-1-ylimino)methylamino]-1-(5-phospho-beta-D-ribosyl)imidazole-4-carboxamide + L-glutamine = D-erythro-1-(imidazol-4-yl)glycerol 3-phosphate + 5-amino-1-(5-phospho-beta-D-ribosyl)imidazole-4-carboxamide + L-glutamate + H(+). The protein operates within amino-acid biosynthesis; L-histidine biosynthesis; L-histidine from 5-phospho-alpha-D-ribose 1-diphosphate: step 5/9. IGPS catalyzes the conversion of PRFAR and glutamine to IGP, AICAR and glutamate. The HisF subunit catalyzes the cyclization activity that produces IGP and AICAR from PRFAR using the ammonia provided by the HisH subunit. In Chloroflexus aggregans (strain MD-66 / DSM 9485), this protein is Imidazole glycerol phosphate synthase subunit HisF.